A 500-amino-acid polypeptide reads, in one-letter code: ATP synthase subunit alpha, sodium ion specific (500 aa).

ATP is bound at residue 169–176; sequence GDRQTGKT.

The protein belongs to the ATPase alpha/beta chains family. F-type ATPases have 2 components, CF(1) - the catalytic core - and CF(0) - the membrane proton channel. CF(1) has five subunits: alpha(3), beta(3), gamma(1), delta(1), epsilon(1). CF(0) has three main subunits: a, b and c.

It is found in the cell membrane. The catalysed reaction is 4 Na(+)(in) + ATP + H2O = 4 Na(+)(out) + ADP + phosphate + H(+). Functionally, produces ATP from ADP in the presence of a sodium ion gradient across the membrane. The alpha chain is a regulatory subunit. This chain is ATP synthase subunit alpha, sodium ion specific, found in Propionigenium modestum.